A 640-amino-acid polypeptide reads, in one-letter code: MKNKNSEQNTHYTIGEQDIHYFHEGKHIYAYEFMGAHKACEEGIEGIRFTTWAPNAKSICVIGDFNYWQVEDKNYMEPITDAGLWSVFIPNAKNGDKYKFVVTNKDTSHYVYKSDPYAFFSELRPNTASIITTETQYTWSDDKWLEKRAKTNYYDNPMNVYELHLASWKTKNGKFLTYDELSETLPQYIKEMGYTHVEFMPLHEHPLDASWGYQPTGFYSVNSRHGDIIGLKRLVDKLHNNDIGVILDWVPGHFCKDQHGLIYFDGSPCYEYQEPTKAINKGWETHNFDLGRNEVKCFLISNAMYWINEFHIDGLRVDAVSNILYLNYDREDGQWIPNIYGGHENLEGIAFLKELNGVLKHTCKGVITIAEESSSWPDISTPVEKGGLGFDFKWNMGWMNDTLRYISLDPVYRKYHHNLITFSMVYHYSEKFILSISHDEVVHGKKSLINKMWGDLWNKYAGLRLYMSYMIGHPGKKLIFMGSEFVQFVEWREYEQLQWQVVDQYESHKQTLHFFKKLNDFYHNETALWQCDYDHHGFRWIDANNSQQSILSFIRSSKDNKQKLIFICNFTPVTYYDYHLGVPDAGSYKEVFNSDNLEFGGSGQVMATEIFSSPQSSHGFEQRIIIKIPPMATLVLKLIK.

The Nucleophile role is filled by aspartate 318. Residue glutamate 371 is the Proton donor of the active site.

Belongs to the glycosyl hydrolase 13 family. GlgB subfamily. Monomer.

The catalysed reaction is Transfers a segment of a (1-&gt;4)-alpha-D-glucan chain to a primary hydroxy group in a similar glucan chain.. It participates in glycan biosynthesis; glycogen biosynthesis. In terms of biological role, catalyzes the formation of the alpha-1,6-glucosidic linkages in glycogen by scission of a 1,4-alpha-linked oligosaccharide from growing alpha-1,4-glucan chains and the subsequent attachment of the oligosaccharide to the alpha-1,6 position. The polypeptide is 1,4-alpha-glucan branching enzyme GlgB (Francisella tularensis subsp. holarctica (strain LVS)).